The following is a 302-amino-acid chain: UDP-N-acetylenolpyruvoylglucosamine reductase (302 aa).

Residues 27–192 (KVGGAVDYLA…LSAKFALRPG (166 aa)) enclose the FAD-binding PCMH-type domain. Arg-171 is an active-site residue. The active-site Proton donor is Ser-221. Residue Glu-291 is part of the active site.

It belongs to the MurB family. FAD is required as a cofactor.

It localises to the cytoplasm. The enzyme catalyses UDP-N-acetyl-alpha-D-muramate + NADP(+) = UDP-N-acetyl-3-O-(1-carboxyvinyl)-alpha-D-glucosamine + NADPH + H(+). Its pathway is cell wall biogenesis; peptidoglycan biosynthesis. Cell wall formation. The polypeptide is UDP-N-acetylenolpyruvoylglucosamine reductase (Streptococcus suis (strain 98HAH33)).